The primary structure comprises 359 residues: 3-dehydroquinate synthase (359 aa).

NAD(+) is bound by residues 72 to 77, 106 to 110, 130 to 131, K143, K152, and 170 to 173; these read EGEIHK, GVIGD, TS, and CLKT. Zn(2+) is bound by residues E185, H248, and H264.

This sequence belongs to the sugar phosphate cyclases superfamily. Dehydroquinate synthase family. Requires Co(2+) as cofactor. Zn(2+) serves as cofactor. The cofactor is NAD(+).

The protein resides in the cytoplasm. The catalysed reaction is 7-phospho-2-dehydro-3-deoxy-D-arabino-heptonate = 3-dehydroquinate + phosphate. It functions in the pathway metabolic intermediate biosynthesis; chorismate biosynthesis; chorismate from D-erythrose 4-phosphate and phosphoenolpyruvate: step 2/7. Its function is as follows. Catalyzes the conversion of 3-deoxy-D-arabino-heptulosonate 7-phosphate (DAHP) to dehydroquinate (DHQ). This chain is 3-dehydroquinate synthase, found in Dehalococcoides mccartyi (strain ATCC BAA-2100 / JCM 16839 / KCTC 5957 / BAV1).